We begin with the raw amino-acid sequence, 115 residues long: Nitrogen regulatory protein P-II 1 (115 aa).

Tyr54 is modified (O-UMP-tyrosine).

It belongs to the P(II) protein family.

Functionally, could be involved in the regulation of nitrogen fixation. The protein is Nitrogen regulatory protein P-II 1 of Methanothermobacter thermautotrophicus (strain ATCC 29096 / DSM 1053 / JCM 10044 / NBRC 100330 / Delta H) (Methanobacterium thermoautotrophicum).